A 459-amino-acid chain; its full sequence is Kelch-like protein terF (459 aa).

Kelch repeat units lie at residues 92–144, 145–196, 198–248, 251–304, 306–354, and 355–405; these read STVV…LVGD, EIFV…VVDG, IYYL…TVVV, TIYL…IYRD, LYIL…TIGS, and LIFT…VYKG.

Its pathway is secondary metabolite biosynthesis. Kelch-like protein; part of the gene cluster that mediates the biosynthesis of terrein, a fungal metabolite with ecological, antimicrobial, antiproliferative, and antioxidative activities. The first step in the pathway is performed by the polyketide synthase terA that produces 4-hydroxy-6-methylpyranon (4-HMP), orsellinic acid (OA), and 2,3-dehydro-6-hydroxymellein (2,3-dehydro-6-HM) by condensing acetyl-CoA with two, three, or four malonyl-CoA units, respectively. 4-HMP and OA are not pathway intermediates, but are rather shunt or side products. 2,3-dehydro-6-HM is further converted to 6-hydroxymellein (6-HM) by the 6-hydroxymellein synthase terB. The monooxygenases terC and terD, the multicopper oxidase terE and the Kelch-like protein terF are then involved in the transformation of 6-HM to terrein. Even if they are co-regulated with the other terrein cluster genes, terH and terI seem to be dispensable for terrein production; whereas one or both of the 2 transporters terG and terJ are probably required for efficient secretion of metabolites. In Aspergillus terreus (strain NIH 2624 / FGSC A1156), this protein is Kelch-like protein terF.